We begin with the raw amino-acid sequence, 432 residues long: UDP-N-acetylglucosamine 1-carboxyvinyltransferase (432 aa).

22-23 (KN) is a binding site for phosphoenolpyruvate. Position 101 (R101) interacts with UDP-N-acetyl-alpha-D-glucosamine. C125 serves as the catalytic Proton donor. Position 125 is a 2-(S-cysteinyl)pyruvic acid O-phosphothioketal (C125). Residues 130 to 134 (RPVDL), D315, and I337 each bind UDP-N-acetyl-alpha-D-glucosamine.

The protein belongs to the EPSP synthase family. MurA subfamily.

It is found in the cytoplasm. The enzyme catalyses phosphoenolpyruvate + UDP-N-acetyl-alpha-D-glucosamine = UDP-N-acetyl-3-O-(1-carboxyvinyl)-alpha-D-glucosamine + phosphate. It participates in cell wall biogenesis; peptidoglycan biosynthesis. Cell wall formation. Adds enolpyruvyl to UDP-N-acetylglucosamine. The sequence is that of UDP-N-acetylglucosamine 1-carboxyvinyltransferase from Paramagnetospirillum magneticum (strain ATCC 700264 / AMB-1) (Magnetospirillum magneticum).